Consider the following 211-residue polypeptide: Probable GTP-binding protein EngB (211 aa).

An EngB-type G domain is found at 21–205 (LMATIVFVGR…KNRIYEIIRE (185 aa)). Residues 29-36 (GRSNVGKS), 54-58 (GVTRK), 71-74 (DMPG), 151-154 (NKLD), and 184-186 (ISA) contribute to the GTP site. Ser36 and Thr56 together coordinate Mg(2+).

It belongs to the TRAFAC class TrmE-Era-EngA-EngB-Septin-like GTPase superfamily. EngB GTPase family. Requires Mg(2+) as cofactor.

In terms of biological role, necessary for normal cell division and for the maintenance of normal septation. This chain is Probable GTP-binding protein EngB, found in Pyrococcus abyssi (strain GE5 / Orsay).